Consider the following 286-residue polypeptide: ATP synthase gamma chain (286 aa).

The protein belongs to the ATPase gamma chain family. As to quaternary structure, F-type ATPases have 2 components, CF(1) - the catalytic core - and CF(0) - the membrane proton channel. CF(1) has five subunits: alpha(3), beta(3), gamma(1), delta(1), epsilon(1). CF(0) has three main subunits: a, b and c.

It localises to the cell membrane. Produces ATP from ADP in the presence of a proton gradient across the membrane. The gamma chain is believed to be important in regulating ATPase activity and the flow of protons through the CF(0) complex. This Oceanobacillus iheyensis (strain DSM 14371 / CIP 107618 / JCM 11309 / KCTC 3954 / HTE831) protein is ATP synthase gamma chain.